The sequence spans 189 residues: UPF0301 protein RPR_01165 (189 aa).

It belongs to the UPF0301 (AlgH) family.

This chain is UPF0301 protein RPR_01165, found in Rickettsia peacockii (strain Rustic).